We begin with the raw amino-acid sequence, 454 residues long: tRNA modification GTPase MnmE (454 aa).

Residues R23, E80, and K120 each coordinate (6S)-5-formyl-5,6,7,8-tetrahydrofolate. The TrmE-type G domain occupies 216–377 (GMKVVIAGRP…LRNHLKQSMG (162 aa)). N226 contacts K(+). GTP contacts are provided by residues 226-231 (NAGKSS), 245-251 (TDIAGTT), 270-273 (DTAG), 335-338 (NKAD), and 358-360 (SAR). S230 is a binding site for Mg(2+). Residues T245, I247, and T250 each coordinate K(+). T251 serves as a coordination point for Mg(2+). Residue K454 coordinates (6S)-5-formyl-5,6,7,8-tetrahydrofolate.

It belongs to the TRAFAC class TrmE-Era-EngA-EngB-Septin-like GTPase superfamily. TrmE GTPase family. In terms of assembly, homodimer. Heterotetramer of two MnmE and two MnmG subunits. It depends on K(+) as a cofactor.

Its subcellular location is the cytoplasm. Functionally, exhibits a very high intrinsic GTPase hydrolysis rate. Involved in the addition of a carboxymethylaminomethyl (cmnm) group at the wobble position (U34) of certain tRNAs, forming tRNA-cmnm(5)s(2)U34. The sequence is that of tRNA modification GTPase MnmE from Shigella flexneri serotype 5b (strain 8401).